The sequence spans 383 residues: Protein COS5 (383 aa).

Over 1–42 (MKENELKNEKSVDVLSFKQLESQKIVLPQDLFRSSFTWFCYE) the chain is Cytoplasmic. Residues 43 to 63 (IYKSLAFPIWMLLWLPLSVWW) form a helical membrane-spanning segment. Over 64 to 72 (KLSNNCIYP) the chain is Extracellular. A helical membrane pass occupies residues 73–93 (LIVSLLVLFLGPIFVLVICGL). Topologically, residues 94–232 (SRKRSLSKQL…RSKLTWFLKR (139 aa)) are cytoplasmic. The chain crosses the membrane as a helical span at residues 233-253 (IFTIYSLPLWLAFLNCICVSQ). Residue His-254 is a topological domain, extracellular. Residues 255-275 (FCLAFRILCPGLFFLMMVWLF) traverse the membrane as a helical segment. Over 276-383 (QNMRTTALLV…SRNEESLMKK (108 aa)) the chain is Cytoplasmic.

The protein belongs to the DUP/COS family.

It localises to the membrane. This Saccharomyces cerevisiae (strain ATCC 204508 / S288c) (Baker's yeast) protein is Protein COS5 (COS5).